The primary structure comprises 416 residues: Serine hydroxymethyltransferase (416 aa).

(6S)-5,6,7,8-tetrahydrofolate contacts are provided by residues L121 and G125–L127. The residue at position 229 (K229) is an N6-(pyridoxal phosphate)lysine.

It belongs to the SHMT family. As to quaternary structure, homodimer. Pyridoxal 5'-phosphate serves as cofactor.

It localises to the cytoplasm. It carries out the reaction (6R)-5,10-methylene-5,6,7,8-tetrahydrofolate + glycine + H2O = (6S)-5,6,7,8-tetrahydrofolate + L-serine. Its pathway is one-carbon metabolism; tetrahydrofolate interconversion. It participates in amino-acid biosynthesis; glycine biosynthesis; glycine from L-serine: step 1/1. Functionally, catalyzes the reversible interconversion of serine and glycine with tetrahydrofolate (THF) serving as the one-carbon carrier. This reaction serves as the major source of one-carbon groups required for the biosynthesis of purines, thymidylate, methionine, and other important biomolecules. Also exhibits THF-independent aldolase activity toward beta-hydroxyamino acids, producing glycine and aldehydes, via a retro-aldol mechanism. In Neisseria gonorrhoeae (strain ATCC 700825 / FA 1090), this protein is Serine hydroxymethyltransferase.